Reading from the N-terminus, the 415-residue chain is tRNA(Ile2) 2-agmatinylcytidine synthetase TiaS (415 aa).

Belongs to the TiaS family.

The protein resides in the cytoplasm. It carries out the reaction cytidine(34) in tRNA(Ile2) + agmatine + ATP + H2O = 2-agmatinylcytidine(34) in tRNA(Ile2) + AMP + 2 phosphate + 2 H(+). Its function is as follows. ATP-dependent agmatine transferase that catalyzes the formation of 2-agmatinylcytidine (agm2C) at the wobble position (C34) of tRNA(Ile2), converting the codon specificity from AUG to AUA. This is tRNA(Ile2) 2-agmatinylcytidine synthetase TiaS from Pyrobaculum neutrophilum (strain DSM 2338 / JCM 9278 / NBRC 100436 / V24Sta) (Thermoproteus neutrophilus).